Consider the following 178-residue polypeptide: uncharacterized protein (178 aa).

The N-acetyltransferase domain occupies 9 to 173 (LTLRKMELED…IDVYMFSLLK (165 aa)).

This is an uncharacterized protein from Bacillus licheniformis.